A 357-amino-acid polypeptide reads, in one-letter code: Cytoplasmic tRNA 2-thiolation protein 1 (357 aa).

Residues 314–348 (GVSRTRGRRGEKAGLHPDVGRGGGGGSSGPAEVAS) form a disordered region. Residues 321 to 332 (RRGEKAGLHPDV) are compositionally biased toward basic and acidic residues.

The protein belongs to the TtcA family. CTU1/NCS6/ATPBD3 subfamily.

It localises to the cytoplasm. Its pathway is tRNA modification; 5-methoxycarbonylmethyl-2-thiouridine-tRNA biosynthesis. Plays a central role in 2-thiolation of mcm(5)S(2)U at tRNA wobble positions of tRNA(Lys), tRNA(Glu) and tRNA(Gln). Directly binds tRNAs and probably acts by catalyzing adenylation of tRNAs, an intermediate required for 2-thiolation. It is unclear whether it acts as a sulfurtransferase that transfers sulfur from thiocarboxylated URM1 onto the uridine of tRNAs at wobble position. This is Cytoplasmic tRNA 2-thiolation protein 1 from Chlamydomonas reinhardtii (Chlamydomonas smithii).